A 44-amino-acid chain; its full sequence is U4-ctenitoxin-Pk1a (44 aa).

Intrachain disulfides connect C4-C18, C11-C24, C15-C42, C17-C33, and C26-C31.

Expressed by the venom gland.

Its subcellular location is the secreted. Its function is as follows. Neurotoxin. Causes spastic paralysis and death in mice within 10 minutes at dose levels of 3 ug per mouse. This chain is U4-ctenitoxin-Pk1a, found in Phoneutria keyserlingi (Brazilian wandering spider).